The chain runs to 248 residues: 2,3-bisphosphoglycerate-dependent phosphoglycerate mutase (248 aa).

Substrate is bound by residues 8 to 15 (RHGESEWN), 21 to 22 (TG), arginine 60, 87 to 90 (ERHY), lysine 98, 114 to 115 (RR), and 183 to 184 (GN). The active-site Tele-phosphohistidine intermediate is histidine 9. Glutamate 87 functions as the Proton donor/acceptor in the catalytic mechanism.

It belongs to the phosphoglycerate mutase family. BPG-dependent PGAM subfamily.

It catalyses the reaction (2R)-2-phosphoglycerate = (2R)-3-phosphoglycerate. Its pathway is carbohydrate degradation; glycolysis; pyruvate from D-glyceraldehyde 3-phosphate: step 3/5. Functionally, catalyzes the interconversion of 2-phosphoglycerate and 3-phosphoglycerate. This chain is 2,3-bisphosphoglycerate-dependent phosphoglycerate mutase, found in Borreliella burgdorferi (strain ATCC 35210 / DSM 4680 / CIP 102532 / B31) (Borrelia burgdorferi).